A 304-amino-acid polypeptide reads, in one-letter code: D-alanine--D-alanine ligase (304 aa).

Positions 103–299 (KLIWQALGLP…FADLCIEILK (197 aa)) constitute an ATP-grasp domain. Position 129–184 (129–184 (EEKLGLPMFVKPAAEGSSVGVVKVKGKGRLKSVYEELKHLQGEIIAERFIGGGEYS)) interacts with ATP. The Mg(2+) site is built by Asp-253, Glu-266, and Asn-268.

This sequence belongs to the D-alanine--D-alanine ligase family. Requires Mg(2+) as cofactor. Mn(2+) is required as a cofactor.

It localises to the cytoplasm. The catalysed reaction is 2 D-alanine + ATP = D-alanyl-D-alanine + ADP + phosphate + H(+). It participates in cell wall biogenesis; peptidoglycan biosynthesis. In terms of biological role, cell wall formation. The chain is D-alanine--D-alanine ligase from Neisseria meningitidis serogroup C / serotype 2a (strain ATCC 700532 / DSM 15464 / FAM18).